The primary structure comprises 257 residues: MIHLKRPNSPSKLINEEAKLTQEFLQNGNSVWGKPYIKLALLEMSNNKCVYCECRLDEESKYMEVEHFLPKDTYPNLVVNWRNLLPSCKRCNGKKGTHDSKKEPIINPTVDTPSNHIKMFNYCLKGKDLKGKTTVDVLHLNQLDRLVYPRMLIGTKTIETVEKLLEMAENFNLNINATGRIKSRIIHGTTQLLIEAQPHSEYSATVASVLFNNEDFVKLKEIMIKCTIWNTEHQKLLSNAERNILVEPLYNCLNNKN.

Positions 49-96 constitute an HNH domain; that stretch reads CVYCECRLDEESKYMEVEHFLPKDTYPNLVVNWRNLLPSCKRCNGKKG.

Component of antiviral defense system Septu type I, composed of PtuA and PtuB. Expression of Septu type I in B.subtilis (strain BEST7003) confers resistance to phages SBSphiC and SBSphiJ. May be a nuclease. The sequence is that of Septu protein PtuB from Bacillus thuringiensis.